The primary structure comprises 401 residues: Dual-specificity RNA methyltransferase RlmN (401 aa).

E114 functions as the Proton acceptor in the catalytic mechanism. Residues 120–365 (DKGRGTLCVS…TMVRRTRGDD (246 aa)) form the Radical SAM core domain. C127 and C370 are joined by a disulfide. [4Fe-4S] cluster-binding residues include C134, C138, and C141. S-adenosyl-L-methionine is bound by residues 187-188 (GE), S219, 241-243 (SLH), and N327. The S-methylcysteine intermediate role is filled by C370.

Belongs to the radical SAM superfamily. RlmN family. The cofactor is [4Fe-4S] cluster.

Its subcellular location is the cytoplasm. It carries out the reaction adenosine(2503) in 23S rRNA + 2 reduced [2Fe-2S]-[ferredoxin] + 2 S-adenosyl-L-methionine = 2-methyladenosine(2503) in 23S rRNA + 5'-deoxyadenosine + L-methionine + 2 oxidized [2Fe-2S]-[ferredoxin] + S-adenosyl-L-homocysteine. The catalysed reaction is adenosine(37) in tRNA + 2 reduced [2Fe-2S]-[ferredoxin] + 2 S-adenosyl-L-methionine = 2-methyladenosine(37) in tRNA + 5'-deoxyadenosine + L-methionine + 2 oxidized [2Fe-2S]-[ferredoxin] + S-adenosyl-L-homocysteine. Its function is as follows. Specifically methylates position 2 of adenine 2503 in 23S rRNA and position 2 of adenine 37 in tRNAs. m2A2503 modification seems to play a crucial role in the proofreading step occurring at the peptidyl transferase center and thus would serve to optimize ribosomal fidelity. This is Dual-specificity RNA methyltransferase RlmN from Xanthomonas campestris pv. campestris (strain B100).